The following is a 1093-amino-acid chain: Non-canonical non-ribosomal peptide synthetase ascB (1093 aa).

The segment covering 1–26 has biased composition (low complexity); it reads MTVNGHHTNGVNGANGTNGHANGSNG. Residues 1–27 are disordered; that stretch reads MTVNGHHTNGVNGANGTNGHANGSNGI. The interval 35 to 392 is adenylation (A) domain; it reads EIVPFVKPQV…LSLTFAPTDN (358 aa). Residues 591–678 enclose the Carrier domain; the sequence is DNLEQNLKSL…EIAAALTKGS (88 aa). Position 627 is an O-(pantetheine 4'-phosphoryl)serine (Ser627). Residues 721-971 form a thioester reductase (TR) domain region; the sequence is LTGATGSLGS…IPVDDAASTV (251 aa).

It belongs to the NRP synthetase family.

The catalysed reaction is ilicicolinate B + AH2 + ATP = ilicicolin B + A + AMP + diphosphate. It participates in secondary metabolite biosynthesis; terpenoid biosynthesis. In terms of biological role, non-canonical non-ribosomal peptide synthetase; part of the asc-1 gene cluster that mediates the biosynthesis of both ascochlorin and ascofuranone, a strong inhibitor of cyanide-insensitive alternative oxidases and a promising drug candidate against African trypanosomiasis. The first step in the pathway is performed by the non-reducing polyketide synthase ascC that produces orsellinic acid by condensing acetyl-CoA with 3 malonyl-CoA units. Orsellinic acid is then prenylated by the prenyltransferase ascA to yield ilicicolinic acid B. Ilicicolinic acid B is further reduced to ilicicolin B by the reductase ascB. The halogenase ascD then chlorinates ilicicolin B to produce ilicicolin A which is converted to ilicicolin A epoxide by the cytochrome P450 monooxygenase ascE that catalyzes stereoselective epoxidation of the terminal double bond of the prenyl group. Ilicicolin A epoxide is the last common precursor for the biosynthesis of ascofuranone and ascochlorin. The terpene cyclase ascF produces a monocyclic terpene, and the cyclization reaction is proposed to be initiated by protonation of the terminal epoxide of ilicicolin A epoxide to generate a monocyclic tertiarycation, which is followed by a series of hydride and methyl shifts with abstraction of proton, leading to the formation of the (14S,15R,19R)-trimethylcyclohexanone ring structure of ilicicolin C, which is finally reduced to ascochlorin by the dehydrogenase ascG. On the other hand, ilicicolin A epoxide is hydroxylated by the cytochrome P450 monooxygenase ascH, and the resultant product is cyclized by the terpene cyclase ascI to ascofuranol via protonation-initiated epoxide ring opening, which facilitates the 6-endo-tet cyclization to form the tetrahy-drofuran ring. Finally, ascofuranol is oxidized into ascofuranone by ascJ. The chain is Non-canonical non-ribosomal peptide synthetase ascB from Acremonium egyptiacum (Oospora egyptiaca).